We begin with the raw amino-acid sequence, 248 residues long: Probable transcriptional regulatory protein Rsph17025_0577 (248 aa).

A disordered region spans residues 1-21 (MAGHSKWANIQHRKGKQDKLR).

Belongs to the TACO1 family.

It localises to the cytoplasm. This Cereibacter sphaeroides (strain ATCC 17025 / ATH 2.4.3) (Rhodobacter sphaeroides) protein is Probable transcriptional regulatory protein Rsph17025_0577.